We begin with the raw amino-acid sequence, 308 residues long: Ornithine carbamoyltransferase (308 aa).

Residues serine 56–threonine 59, glutamine 83, arginine 107, and histidine 134–glutamine 137 contribute to the carbamoyl phosphate site. L-ornithine-binding positions include asparagine 165, aspartate 225, and serine 229 to methionine 230. Residues cysteine 266 to leucine 267 and arginine 294 each bind carbamoyl phosphate.

The protein belongs to the aspartate/ornithine carbamoyltransferase superfamily. OTCase family.

It localises to the cytoplasm. It carries out the reaction carbamoyl phosphate + L-ornithine = L-citrulline + phosphate + H(+). The protein operates within amino-acid degradation; L-arginine degradation via ADI pathway; carbamoyl phosphate from L-arginine: step 2/2. Functionally, reversibly catalyzes the transfer of the carbamoyl group from carbamoyl phosphate (CP) to the N(epsilon) atom of ornithine (ORN) to produce L-citrulline. This Cereibacter sphaeroides (strain KD131 / KCTC 12085) (Rhodobacter sphaeroides) protein is Ornithine carbamoyltransferase.